The following is a 350-amino-acid chain: Flap endonuclease 1 (350 aa).

An N-domain region spans residues 1–102; it reads MGVTELGKLI…IEIEKRRRVR (102 aa). Residues aspartate 31, aspartate 84, glutamate 156, glutamate 158, aspartate 177, aspartate 179, and aspartate 241 each coordinate Mg(2+). The segment at 120 to 263 is I-domain; sequence EARKYAQRAL…RALRLIQEYG (144 aa).

This sequence belongs to the XPG/RAD2 endonuclease family. FEN1 subfamily. As to quaternary structure, interacts with PCNA. PCNA stimulates the nuclease activity without altering cleavage specificity. Requires Mg(2+) as cofactor.

In terms of biological role, structure-specific nuclease with 5'-flap endonuclease and 5'-3' exonuclease activities involved in DNA replication and repair. During DNA replication, cleaves the 5'-overhanging flap structure that is generated by displacement synthesis when DNA polymerase encounters the 5'-end of a downstream Okazaki fragment. Binds the unpaired 3'-DNA end and kinks the DNA to facilitate 5' cleavage specificity. Cleaves one nucleotide into the double-stranded DNA from the junction in flap DNA, leaving a nick for ligation. Also involved in the base excision repair (BER) pathway. Acts as a genome stabilization factor that prevents flaps from equilibrating into structures that lead to duplications and deletions. Also possesses 5'-3' exonuclease activity on nicked or gapped double-stranded DNA. The chain is Flap endonuclease 1 from Caldivirga maquilingensis (strain ATCC 700844 / DSM 13496 / JCM 10307 / IC-167).